The sequence spans 69 residues: Cytochrome c oxidase subunit 8A, mitochondrial (69 aa).

Residues 1 to 25 (MSVLTPLLLRGLTGSARRLPVPRAK) constitute a mitochondrion transit peptide. The SIFI-degron signature appears at 2–19 (SVLTPLLLRGLTGSARRL). Topologically, residues 26 to 36 (IHSLPPEEKLG) are mitochondrial matrix. Residues 37–60 (IMELAVGLTSCFVTFLLPAGWILS) form a helical membrane-spanning segment. The Mitochondrial intermembrane segment spans residues 61–69 (HLETYRRPE).

Belongs to the cytochrome c oxidase VIII family. In terms of assembly, component of the cytochrome c oxidase (complex IV, CIV), a multisubunit enzyme composed of 14 subunits. The complex is composed of a catalytic core of 3 subunits MT-CO1, MT-CO2 and MT-CO3, encoded in the mitochondrial DNA, and 11 supernumerary subunits COX4I, COX5A, COX5B, COX6A, COX6B, COX6C, COX7A, COX7B, COX7C, COX8 and NDUFA4, which are encoded in the nuclear genome. The complex exists as a monomer or a dimer and forms supercomplexes (SCs) in the inner mitochondrial membrane with NADH-ubiquinone oxidoreductase (complex I, CI) and ubiquinol-cytochrome c oxidoreductase (cytochrome b-c1 complex, complex III, CIII), resulting in different assemblies (supercomplex SCI(1)III(2)IV(1) and megacomplex MCI(2)III(2)IV(2)). In response to mitochondrial stress, the precursor protein is ubiquitinated by the SIFI complex in the cytoplasm before mitochondrial import, leading to its degradation. Within the SIFI complex, UBR4 initiates ubiquitin chain that are further elongated or branched by KCMF1.

It localises to the mitochondrion inner membrane. It participates in energy metabolism; oxidative phosphorylation. Its function is as follows. Component of the cytochrome c oxidase, the last enzyme in the mitochondrial electron transport chain which drives oxidative phosphorylation. The respiratory chain contains 3 multisubunit complexes succinate dehydrogenase (complex II, CII), ubiquinol-cytochrome c oxidoreductase (cytochrome b-c1 complex, complex III, CIII) and cytochrome c oxidase (complex IV, CIV), that cooperate to transfer electrons derived from NADH and succinate to molecular oxygen, creating an electrochemical gradient over the inner membrane that drives transmembrane transport and the ATP synthase. Cytochrome c oxidase is the component of the respiratory chain that catalyzes the reduction of oxygen to water. Electrons originating from reduced cytochrome c in the intermembrane space (IMS) are transferred via the dinuclear copper A center (CU(A)) of subunit 2 and heme A of subunit 1 to the active site in subunit 1, a binuclear center (BNC) formed by heme A3 and copper B (CU(B)). The BNC reduces molecular oxygen to 2 water molecules using 4 electrons from cytochrome c in the IMS and 4 protons from the mitochondrial matrix. The polypeptide is Cytochrome c oxidase subunit 8A, mitochondrial (COX8A) (Hylobates agilis (Agile gibbon)).